Consider the following 315-residue polypeptide: MGRTFIHASKIKHAARKRKHHSNFRTLIKLLNNDAYKIESSKPLKNGKLFKYWKNRRRLFSKIDSASIYMTDELWFSVTPERIACFLANFVKACMPNAERILDVFCGGGGNTIQFAMQFPYVYGVDYSIEHIYCTAKNAQSYGVDDRIWLKRGSWKKLVSKQKLSKIKYDCVFGSPPWGGPEYLRNDVYDLEQHLKPMGITKMLKSFLKLSPNVIMFLPRNSDLNQLSRATRKVLGPFAKCKVLYVKENGYMKGIFCMWGECFFNYEPASTENSRRESSEKEELSSENEELSKRKKHESTTTTKDNTVDIYDVNG.

The required for correct nucleolar localization stretch occupies residues 1 to 58; the sequence is MGRTFIHASKIKHAARKRKHHSNFRTLIKLLNNDAYKIESSKPLKNGKLFKYWKNRRR. S-adenosyl-L-methionine is bound at residue aspartate 126. Residues 271–315 are disordered; the sequence is TENSRRESSEKEELSSENEELSKRKKHESTTTTKDNTVDIYDVNG. The span at 273-284 shows a compositional bias: basic and acidic residues; it reads NSRRESSEKEEL.

The protein belongs to the methyltransferase superfamily. Trimethylguanosine synthase family. Monomer. Interacts with the spliceosomal snRNP core component SMB1 and the snoRNP components CBF5 and NOP58.

The protein resides in the nucleus. It localises to the nucleolus. It carries out the reaction a 5'-end (N(7)-methyl 5'-triphosphoguanosine)-ribonucleoside in snRNA + S-adenosyl-L-methionine = a 5'-end (N(2),N(7)-dimethyl 5'-triphosphoguanosine)-ribonucleoside in snRNA + S-adenosyl-L-homocysteine + H(+). The enzyme catalyses a 5'-end (N(7)-methyl 5'-triphosphoguanosine)-ribonucleoside in snoRNA + S-adenosyl-L-methionine = a 5'-end (N(2),N(7)-dimethyl 5'-triphosphoguanosine)-ribonucleoside in snoRNA + S-adenosyl-L-homocysteine + H(+). It catalyses the reaction a 5'-end (N(2),N(7)-dimethyl 5'-triphosphoguanosine)-ribonucleoside in snRNA + S-adenosyl-L-methionine = a 5'-end (N(2),N(2),N(7)-trimethyl 5'-triphosphoguanosine)-ribonucleoside in snRNA + S-adenosyl-L-homocysteine + H(+). The catalysed reaction is a 5'-end (N(2),N(7)-dimethyl 5'-triphosphoguanosine)-ribonucleoside in snoRNA + S-adenosyl-L-methionine = a 5'-end (N(2),N(2),N(7)-trimethyl 5'-triphosphoguanosine)-ribonucleoside in snoRNA + S-adenosyl-L-homocysteine + H(+). Substrate inhibited by S-adenosyl-L-homocysteine. In terms of biological role, catalyzes the two serial methylation steps for the conversion of the 7-monomethylguanosine (m(7)G) caps of snRNAs and snoRNAs to a 2,2,7-trimethylguanosine (m(2,2,7)G) cap structure. The enzyme is specific for guanine, and N7 methylation must precede N2 methylation. Hypermethylates the m3G cap on TLC1 telomerase which affects telomere silencing and telomere length regulation. Required for pre-mRNA splicing, pre-rRNA processing and small ribosomal subunit synthesis. Involved in nucleolar structural organization. In Saccharomyces cerevisiae (strain ATCC 204508 / S288c) (Baker's yeast), this protein is Trimethylguanosine synthase (TGS1).